The primary structure comprises 219 residues: Thiopurine S-methyltransferase (219 aa).

Residues W10, L45, E66, and R123 each contribute to the S-adenosyl-L-methionine site.

The protein belongs to the class I-like SAM-binding methyltransferase superfamily. TPMT family.

The protein resides in the cytoplasm. The enzyme catalyses S-adenosyl-L-methionine + a thiopurine = S-adenosyl-L-homocysteine + a thiopurine S-methylether.. The protein is Thiopurine S-methyltransferase of Shewanella pealeana (strain ATCC 700345 / ANG-SQ1).